Here is a 334-residue protein sequence, read N- to C-terminus: CRISPR-associated protein Cas1 3 (334 aa).

Residues Glu165, His230, and Glu245 each contribute to the Mn(2+) site.

The protein belongs to the CRISPR-associated endonuclease Cas1 family. Homodimer, forms a heterotetramer with a Cas2 homodimer. Mg(2+) is required as a cofactor. Requires Mn(2+) as cofactor.

Its function is as follows. CRISPR (clustered regularly interspaced short palindromic repeat), is an adaptive immune system that provides protection against mobile genetic elements (viruses, transposable elements and conjugative plasmids). CRISPR clusters contain spacers, sequences complementary to antecedent mobile elements, and target invading nucleic acids. CRISPR clusters are transcribed and processed into CRISPR RNA (crRNA). Acts as a dsDNA endonuclease. Involved in the integration of spacer DNA into the CRISPR cassette. The protein is CRISPR-associated protein Cas1 3 of Methanobrevibacter ruminantium (strain ATCC 35063 / DSM 1093 / JCM 13430 / OCM 146 / M1) (Methanobacterium ruminantium).